A 290-amino-acid polypeptide reads, in one-letter code: Porphobilinogen deaminase (290 aa).

C237 is modified (S-(dipyrrolylmethanemethyl)cysteine).

Belongs to the HMBS family. Monomer. Dipyrromethane serves as cofactor.

The catalysed reaction is 4 porphobilinogen + H2O = hydroxymethylbilane + 4 NH4(+). Its pathway is porphyrin-containing compound metabolism; protoporphyrin-IX biosynthesis; coproporphyrinogen-III from 5-aminolevulinate: step 2/4. Tetrapolymerization of the monopyrrole PBG into the hydroxymethylbilane pre-uroporphyrinogen in several discrete steps. This is Porphobilinogen deaminase from Clostridium botulinum (strain ATCC 19397 / Type A).